Here is a 282-residue protein sequence, read N- to C-terminus: Fused uL13/uS9 ribosomal subunit protein (282 aa).

Positions 1-141 (MLLMIINGEG…LGEISELLGA (141 aa)) are large ribosomal subunit protein uL13. Residues 150–282 (MKKVIHTSGK…ARARRQKSYR (133 aa)) are small ribosomal subunit protein uS9. The interval 259-282 (DPRRSEPKKYGGRGARARRQKSYR) is disordered. Over residues 273 to 282 (ARARRQKSYR) the composition is skewed to basic residues.

This sequence in the N-terminal section; belongs to the universal ribosomal protein uL13 family. It in the C-terminal section; belongs to the universal ribosomal protein uS9 family. In terms of assembly, L13 is part of the 50S ribosomal subunit. S9 is part of the 30S ribosomal subunit.

In terms of biological role, L13 protein is one of the early assembly proteins of the 50S ribosomal subunit, although it is not seen to bind rRNA by itself. It is important during the early stages of 50S assembly. The polypeptide is Fused uL13/uS9 ribosomal subunit protein (rpl13/rps9) (Methanothermobacter thermautotrophicus (strain ATCC 29096 / DSM 1053 / JCM 10044 / NBRC 100330 / Delta H) (Methanobacterium thermoautotrophicum)).